The primary structure comprises 243 residues: Carboxy-S-adenosyl-L-methionine synthase (243 aa).

Residues tyrosine 40, 65-67 (GCS), 90-91 (DN), 118-119 (DI), asparagine 133, and arginine 200 each bind S-adenosyl-L-methionine.

The protein belongs to the class I-like SAM-binding methyltransferase superfamily. Cx-SAM synthase family. In terms of assembly, homodimer.

It catalyses the reaction prephenate + S-adenosyl-L-methionine = carboxy-S-adenosyl-L-methionine + 3-phenylpyruvate + H2O. Functionally, catalyzes the conversion of S-adenosyl-L-methionine (SAM) to carboxy-S-adenosyl-L-methionine (Cx-SAM). This Shewanella halifaxensis (strain HAW-EB4) protein is Carboxy-S-adenosyl-L-methionine synthase.